A 367-amino-acid polypeptide reads, in one-letter code: Heme A synthase (367 aa).

The next 8 helical transmembrane spans lie at 26 to 46 (IRGW…VGGA), 111 to 131 (LLAR…WVTG), 139 to 159 (LPLL…WWMV), 174 to 194 (LATH…IYRG), 212 to 232 (AAVI…VAGL), 272 to 292 (FVHR…MIAA), 305 to 325 (SVLL…TLLL), and 327 to 347 (VPIG…GFAI). Residue His274 participates in heme binding. Residue His335 coordinates heme.

Belongs to the COX15/CtaA family. Type 2 subfamily. Interacts with CtaB. Heme b is required as a cofactor.

The protein resides in the cell membrane. It carries out the reaction Fe(II)-heme o + 2 A + H2O = Fe(II)-heme a + 2 AH2. Its pathway is porphyrin-containing compound metabolism; heme A biosynthesis; heme A from heme O: step 1/1. In terms of biological role, catalyzes the conversion of heme O to heme A by two successive hydroxylations of the methyl group at C8. The first hydroxylation forms heme I, the second hydroxylation results in an unstable dihydroxymethyl group, which spontaneously dehydrates, resulting in the formyl group of heme A. This is Heme A synthase from Sinorhizobium medicae (strain WSM419) (Ensifer medicae).